The following is a 164-amino-acid chain: Sec-independent protein translocase protein TatB (164 aa).

A helical membrane pass occupies residues 1–21 (MIDIGLSKMALIGAVALIVIG). The tract at residues 81 to 102 (ASEFQKDWESGTSDAAATGHDG) is disordered.

It belongs to the TatB family. The Tat system comprises two distinct complexes: a TatABC complex, containing multiple copies of TatA, TatB and TatC subunits, and a separate TatA complex, containing only TatA subunits. Substrates initially bind to the TatABC complex, which probably triggers association of the separate TatA complex to form the active translocon.

It localises to the cell inner membrane. Functionally, part of the twin-arginine translocation (Tat) system that transports large folded proteins containing a characteristic twin-arginine motif in their signal peptide across membranes. Together with TatC, TatB is part of a receptor directly interacting with Tat signal peptides. TatB may form an oligomeric binding site that transiently accommodates folded Tat precursor proteins before their translocation. The sequence is that of Sec-independent protein translocase protein TatB from Paracidovorax citrulli (strain AAC00-1) (Acidovorax citrulli).